Here is a 273-residue protein sequence, read N- to C-terminus: tRNA (guanine-N(7)-)-methyltransferase A (273 aa).

S-adenosyl-L-methionine-binding residues include glycine 86, glutamate 109, arginine 111, asparagine 142, alanine 143, and leucine 162. The active site involves aspartate 165. The alphaC helix stretch occupies residues 166-174 (PHFKKTKHK). S-adenosyl-L-methionine-binding residues include threonine 240 and glutamate 242. Residues 240–248 (TEEGKKVQR) form an alpha6 helix region.

Belongs to the class I-like SAM-binding methyltransferase superfamily. TrmB family. As to quaternary structure, catalytic component of the METTL1-WDR4 complex, composed of mettl1 and wdr4.

It is found in the nucleus. The catalysed reaction is guanosine(46) in tRNA + S-adenosyl-L-methionine = N(7)-methylguanosine(46) in tRNA + S-adenosyl-L-homocysteine. The enzyme catalyses a guanosine in mRNA + S-adenosyl-L-methionine = an N(7)-methylguanosine in mRNA + S-adenosyl-L-homocysteine. It carries out the reaction a guanosine in miRNA + S-adenosyl-L-methionine = an N(7)-methylguanosine in miRNA + S-adenosyl-L-homocysteine. It participates in tRNA modification; N(7)-methylguanine-tRNA biosynthesis. Its function is as follows. Catalytic component of METTL1-WDR4 methyltransferase complex that mediates the formation of N(7)-methylguanine in a subset of RNA species, such as tRNAs, mRNAs and microRNAs (miRNAs). Catalyzes the formation of N(7)-methylguanine at position 46 (m7G46) in a large subset of tRNAs that contain the 5'-RAGGU-3' motif within the variable loop. M7G46 interacts with C13-G22 in the D-loop to stabilize tRNA tertiary structure and protect tRNAs from decay. Also acts as a methyltransferase for a subset of internal N(7)-methylguanine in mRNAs. Internal N(7)-methylguanine methylation of mRNAs in response to stress promotes their relocalization to stress granules, thereby suppressing their translation. Also methylates a specific subset of miRNAs. The chain is tRNA (guanine-N(7)-)-methyltransferase A (mettl1-A) from Xenopus tropicalis (Western clawed frog).